The following is a 197-amino-acid chain: Heart- and neural crest derivatives-expressed protein 1 (197 aa).

Disordered stretches follow at residues 61-94 and 155-184; these read VVGP…RRTE and VDGK…KGRT. The segment covering 78 to 90 has biased composition (basic residues); the sequence is LGRRKGAPPKKER. Residues 80-132 form the bHLH domain; sequence RRKGAPPKKERRRTESINSAFAELRECIPNVPADTKLSKIKTLRLATSYIGYL.

In terms of assembly, efficient DNA binding requires dimerization with another bHLH protein. In terms of tissue distribution, highly expressed in the adult heart and expressed at lower levels in the intestine and gall bladder.

The protein resides in the nucleus. Its subcellular location is the nucleolus. Plays an essential role in cardiac morphogenesis. The sequence is that of Heart- and neural crest derivatives-expressed protein 1 (hand1) from Xenopus laevis (African clawed frog).